We begin with the raw amino-acid sequence, 1191 residues long: Laminin subunit gamma-2 (1191 aa).

The first 21 residues, 1-21 (MPALWLSCCLGVALLLPAAQA), serve as a signal peptide directing secretion. 12 cysteine pairs are disulfide-bonded: Cys-28-Cys-37, Cys-30-Cys-53, Cys-56-Cys-65, Cys-68-Cys-81, Cys-84-Cys-96, Cys-86-Cys-102, Cys-104-Cys-113, Cys-116-Cys-128, Cys-139-Cys-150, Cys-141-Cys-155, Cys-157-Cys-166, and Cys-169-Cys-184. 3 consecutive Laminin EGF-like domains span residues 28–83 (CDCN…RCLP), 84–130 (CNCH…GCTR), and 139–186 (CDCD…GCTQ). Residues 187–196 (CFCYGHSASC) enclose the Laminin EGF-like 4; first part domain. Residues 213–381 (QDVDGWKAVQ…SGAPAPWVER (169 aa)) enclose the Laminin IV type A domain. Asn-342 and Asn-362 each carry an N-linked (GlcNAc...) asparagine glycan. Positions 382 to 415 (CVCPAGYKGQFCQECASGYKRDSARLGPFGACVP) constitute a Laminin EGF-like 4; second part domain. 3 consecutive Laminin EGF-like domains span residues 416-461 (CNCQ…SCKP), 462-516 (CPCH…PCQR), and 517-572 (CQCN…KCRA). Intrachain disulfides connect Cys-462–Cys-470, Cys-464–Cys-481, Cys-484–Cys-493, Cys-496–Cys-514, Cys-517–Cys-531, Cys-519–Cys-538, Cys-541–Cys-550, Cys-553–Cys-570, Cys-573–Cys-585, Cys-575–Cys-591, and Cys-593–Cys-602. An N-linked (GlcNAc...) asparagine glycan is attached at Asn-526. The Laminin EGF-like 8; truncated domain maps to 573 to 602 (CNCSPMGSEPGECRGDGSCVCKPGFGGLNC). Positions 586–588 (RGD) match the Cell attachment site motif. The interval 603-1191 (DHAALTSCPA…CYNTQALEQQ (589 aa)) is domain II and I. Coiled coils occupy residues 612–710 (ACYN…IRAL) and 759–786 (LAQEATRKADSHAESANAMKQLARETED). O-linked (Xyl...) (chondroitin sulfate) serine glycosylation is present at Ser-805. An N-linked (GlcNAc...) asparagine glycan is attached at Asn-941. A coiled-coil region spans residues 946–996 (EVENILKNLREFDLQVEDRKAEAEEAMKRLSSISQKVADASDKTQQAETAL). N-linked (GlcNAc...) asparagine glycosylation is present at Asn-1032. The stretch at 1139–1178 (LMSDLEERVRRQRNHLHLLETSIDGILADVKNLENIRDNL) forms a coiled coil.

As to quaternary structure, laminin is a complex glycoprotein, consisting of three different polypeptide chains (alpha, beta, gamma), which are bound to each other by disulfide bonds into a cross-shaped molecule comprising one long and three short arms with globules at each end. Gamma-2 is a subunit of laminin-5 (laminin-332 or epiligrin/kalinin/nicein). Binds to fibulin-1, fibulin-1c, fibulin-2 and nidogen. O-glycosylated; contains chondroitin sulfate (CS). In terms of tissue distribution, epithelial cells of many tissues, particularly high levels in tongue, hair follicles and kidney. Basement membranes of the collecting tubules of kidney and pancreas.

Its subcellular location is the secreted. The protein localises to the extracellular space. It localises to the extracellular matrix. The protein resides in the basement membrane. Binding to cells via a high affinity receptor, laminin is thought to mediate the attachment, migration and organization of cells into tissues during embryonic development by interacting with other extracellular matrix components. This is Laminin subunit gamma-2 (Lamc2) from Mus musculus (Mouse).